A 180-amino-acid polypeptide reads, in one-letter code: Transcription factor IBH1-like 1 (180 aa).

The bHLH domain occupies 110–160 (KSKSASEEAAAKAKRLVKRRTQGLRNVVPGGELMSNDVLLLQETLDYIVSL).

The protein belongs to the bHLH protein family.

The protein localises to the nucleus. In terms of biological role, functions redundandly with IBH1/BHLH158 in a regulation node known as the incoherent feed-forward loop (FFL). Acts as transcriptional repressor that negatively regulates cell and organ elongation in response to gibberellin (GA) and brassinosteroid (BR) signaling. This is Transcription factor IBH1-like 1 from Arabidopsis thaliana (Mouse-ear cress).